Reading from the N-terminus, the 308-residue chain is GTPase Era (308 aa).

In terms of domain architecture, Era-type G spans 7–181 (RCGWVALIGP…LRLIVGYMPE (175 aa)). The tract at residues 15–22 (GPPNAGKS) is G1. 15–22 (GPPNAGKS) is a GTP binding site. A G2 region spans residues 41 to 45 (QTTRN). The segment at 62–65 (DTPG) is G3. GTP-binding positions include 62–66 (DTPGI) and 130–133 (NKID). Residues 130-133 (NKID) are G4. A G5 region spans residues 160–162 (ASA). Residues 212-290 (LRQELPYSTA…HLELWVKVRE (79 aa)) enclose the KH type-2 domain.

This sequence belongs to the TRAFAC class TrmE-Era-EngA-EngB-Septin-like GTPase superfamily. Era GTPase family. Monomer.

It is found in the cytoplasm. Its subcellular location is the cell inner membrane. Its function is as follows. An essential GTPase that binds both GDP and GTP, with rapid nucleotide exchange. Plays a role in 16S rRNA processing and 30S ribosomal subunit biogenesis and possibly also in cell cycle regulation and energy metabolism. This is GTPase Era from Nitratidesulfovibrio vulgaris (strain DP4) (Desulfovibrio vulgaris).